The following is a 60-amino-acid chain: Cytotoxin 5 (60 aa).

Disulfide bonds link C3/C21, C14/C38, C42/C53, and C54/C59.

This sequence belongs to the three-finger toxin family. Short-chain subfamily. Type IA cytotoxin sub-subfamily. In terms of assembly, monomer in solution; Homodimer and oligomer in the presence of negatively charged lipids forming a pore with a size ranging between 20 and 30 Angstroms. As to expression, expressed by the venom gland.

It is found in the secreted. The protein resides in the target cell membrane. Its function is as follows. Shows cytolytic activity on many different cells by forming pore in lipid membranes. In vivo, increases heart rate or kills the animal by cardiac arrest. In addition, it binds to heparin with high affinity, interacts with Kv channel-interacting protein 1 (KCNIP1) in a calcium-independent manner, and binds to integrin alpha-V/beta-3 (ITGAV/ITGB3) with moderate affinity. The sequence is that of Cytotoxin 5 from Naja kaouthia (Monocled cobra).